The primary structure comprises 264 residues: 3-methyl-2-oxobutanoate hydroxymethyltransferase (264 aa).

Residues aspartate 45 and aspartate 84 each coordinate Mg(2+). Residues 45–46 (DS), aspartate 84, and lysine 112 contribute to the 3-methyl-2-oxobutanoate site. Glutamate 114 is a Mg(2+) binding site. The active-site Proton acceptor is glutamate 181.

Belongs to the PanB family. As to quaternary structure, homodecamer; pentamer of dimers. Mg(2+) serves as cofactor.

It is found in the cytoplasm. The enzyme catalyses 3-methyl-2-oxobutanoate + (6R)-5,10-methylene-5,6,7,8-tetrahydrofolate + H2O = 2-dehydropantoate + (6S)-5,6,7,8-tetrahydrofolate. Its pathway is cofactor biosynthesis; (R)-pantothenate biosynthesis; (R)-pantoate from 3-methyl-2-oxobutanoate: step 1/2. Functionally, catalyzes the reversible reaction in which hydroxymethyl group from 5,10-methylenetetrahydrofolate is transferred onto alpha-ketoisovalerate to form ketopantoate. In Shewanella sp. (strain MR-7), this protein is 3-methyl-2-oxobutanoate hydroxymethyltransferase.